Consider the following 164-residue polypeptide: UPF0304 protein Asuc_0543 (164 aa).

The protein belongs to the UPF0304 family.

The protein is UPF0304 protein Asuc_0543 of Actinobacillus succinogenes (strain ATCC 55618 / DSM 22257 / CCUG 43843 / 130Z).